A 570-amino-acid chain; its full sequence is Urease subunit alpha (570 aa).

The Urease domain occupies 131–570; sequence GGMDSHIHFI…LPMAQRYFLF (440 aa). Residues His136, His138, and Lys219 each contribute to the Ni(2+) site. Position 219 is an N6-carboxylysine (Lys219). His221 provides a ligand contact to substrate. Positions 248 and 274 each coordinate Ni(2+). His322 functions as the Proton donor in the catalytic mechanism. Asp362 contacts Ni(2+).

Belongs to the metallo-dependent hydrolases superfamily. Urease alpha subunit family. As to quaternary structure, heterotrimer of UreA (gamma), UreB (beta) and UreC (alpha) subunits. Three heterotrimers associate to form the active enzyme. It depends on Ni cation as a cofactor. Post-translationally, carboxylation allows a single lysine to coordinate two nickel ions.

The protein resides in the cytoplasm. The enzyme catalyses urea + 2 H2O + H(+) = hydrogencarbonate + 2 NH4(+). Its pathway is nitrogen metabolism; urea degradation; CO(2) and NH(3) from urea (urease route): step 1/1. This is Urease subunit alpha from Sinorhizobium medicae (strain WSM419) (Ensifer medicae).